The following is a 142-amino-acid chain: Large ribosomal subunit protein uL13 (142 aa).

Belongs to the universal ribosomal protein uL13 family. Part of the 50S ribosomal subunit.

Functionally, this protein is one of the early assembly proteins of the 50S ribosomal subunit, although it is not seen to bind rRNA by itself. It is important during the early stages of 50S assembly. In Cellvibrio japonicus (strain Ueda107) (Pseudomonas fluorescens subsp. cellulosa), this protein is Large ribosomal subunit protein uL13.